Reading from the N-terminus, the 221-residue chain is Adenylate kinase (221 aa).

Gly10 to Thr15 serves as a coordination point for ATP. The tract at residues Ser30 to Val59 is NMP. AMP contacts are provided by residues Thr31, Arg36, Gly57–Val59, Gly85–Arg88, and Gln92. The LID stretch occupies residues Gly122–Asp159. ATP is bound by residues Arg123 and Thr132–Tyr133. Arg156 and Arg167 together coordinate AMP. Residue Gly207 participates in ATP binding.

Belongs to the adenylate kinase family. As to quaternary structure, monomer.

It localises to the cytoplasm. The catalysed reaction is AMP + ATP = 2 ADP. It participates in purine metabolism; AMP biosynthesis via salvage pathway; AMP from ADP: step 1/1. Its function is as follows. Catalyzes the reversible transfer of the terminal phosphate group between ATP and AMP. Plays an important role in cellular energy homeostasis and in adenine nucleotide metabolism. The chain is Adenylate kinase from Cupriavidus metallidurans (strain ATCC 43123 / DSM 2839 / NBRC 102507 / CH34) (Ralstonia metallidurans).